Consider the following 140-residue polypeptide: Large ribosomal subunit protein bL17 (140 aa).

Residues 119 to 133 (DPSAKGAADRARLEE) are compositionally biased toward basic and acidic residues. A disordered region spans residues 119 to 140 (DPSAKGAADRARLEEEGGMTEE).

Belongs to the bacterial ribosomal protein bL17 family. As to quaternary structure, part of the 50S ribosomal subunit. Contacts protein L32.

This Maricaulis maris (strain MCS10) (Caulobacter maris) protein is Large ribosomal subunit protein bL17.